A 335-amino-acid chain; its full sequence is MTQTRKLVTVYGATGNQGRSVVKSLLRAPDSFEVRAITRDPNSVAAQELSILGANLVQADGSQSNQMTEAFQGSWAVFLNINSDDPVFWDPKGPTEFDYGKRIIDSAIVAGVKTLVYSTGAACTELTKGTVSLRHLDTKNQIEMYARSTGAFENLVPIIPGYFLENFLFKQGAFIMGGFPWETDAEGYLTWKVPYWGGEEQIPFLSVADDFGDIVHGILISPSEYHLQVVQAMSEITDYQKMTEAFAKVTGKKTRFQPVLPTWKAFDASGNQGFEDVKSMFGFTQETQGHYFGREATDDQVSKNLKASAVLDYKESQQSPSLKTVRAWFAREFAA.

NADP(+)-binding positions include 12–17 (GATGNQ), 39–43 (RDPNS), 60–61 (DG), 81–88 (INSDDPVF), lysine 139, and 163–166 (FLEN). Positions 161-206 (GYFLENFLFKQGAFIMGGFPWETDAEGYLTWKVPYWGGEEQIPFLS) are interaction with ASS1.

This sequence belongs to the NmrA-type oxidoreductase family.

It participates in secondary metabolite biosynthesis. Functionally, nmrA-like family domain-containing oxidoreductase; part of the gene cluster that mediates the biosynthesis of the indole diterpenes penitrems. The geranylgeranyl diphosphate (GGPP) synthase ptmG catalyzes the first step in penitrem biosynthesis via conversion of farnesyl pyrophosphate and isopentyl pyrophosphate into geranylgeranyl pyrophosphate (GGPP). Condensation of indole-3-glycerol phosphate with GGPP by the prenyl transferase ptmC then forms 3-geranylgeranylindole (3-GGI). Epoxidation by the FAD-dependent monooxygenase ptmM leads to a epoxidized-GGI that is substrate of the terpene cyclase ptmB for cyclization to yield paspaline. Paspaline is subsequently converted to 13-desoxypaxilline by the cytochrome P450 monooxygenase ptmP, the latter being then converted to paxilline by the cytochrome P450 monooxygenase ptmQ. Paxilline is converted to beta-paxitriol via C-10 ketoreduction by the short-chain dehydrogenase ptmH which can be monoprenylated at the C-20 by the indole diterpene prenyltransferase ptmD. A two-step elimination (acetylation and elimination) process performed by the O-acetyltransferase ptmV and ptmI leads to the production of the prenylated form of penijanthine. The FAD-linked oxidoreductase ptmO then converts the prenylated form of penijanthine into PC-M5 which is in turn transformed into PC-M4 by the aromatic dimethylallyltransferase ptmE. Five sequential oxidative transformations performed by the cytochrome P450 monooxygenases ptmK, ptmU, ptmL, ptmN and ptmJ yield the various penitrem compounds. PtmK, ptmU and ptmM are involved in the formation of the key bicyclic ring of penitrem C via the formation of the intermediates secopenitrem D and penitrem D. PtmL catalyzes the epoxidation of penitrem D and C to yield penitrem B and F, respectively. PtmJ catalyzes the last benzylic hydroxylation to convert penitrem B to prenitrem E and penitrem F to penitrem A. This Penicillium ochrochloron protein is NmrA-like family domain-containing oxidoreductase ptmS.